A 197-amino-acid chain; its full sequence is dITP/XTP pyrophosphatase (197 aa).

8 to 13 is a substrate binding site; the sequence is TGNAGK. Positions 40 and 69 each coordinate Mg(2+). The Proton acceptor role is filled by Asp-69. Residues Ser-70, 154–157, Lys-177, and 182–183 each bind substrate; these read FGYD and HR.

Belongs to the HAM1 NTPase family. Homodimer. Mg(2+) serves as cofactor.

The catalysed reaction is XTP + H2O = XMP + diphosphate + H(+). It carries out the reaction dITP + H2O = dIMP + diphosphate + H(+). It catalyses the reaction ITP + H2O = IMP + diphosphate + H(+). Its function is as follows. Pyrophosphatase that catalyzes the hydrolysis of nucleoside triphosphates to their monophosphate derivatives, with a high preference for the non-canonical purine nucleotides XTP (xanthosine triphosphate), dITP (deoxyinosine triphosphate) and ITP. Seems to function as a house-cleaning enzyme that removes non-canonical purine nucleotides from the nucleotide pool, thus preventing their incorporation into DNA/RNA and avoiding chromosomal lesions. The protein is dITP/XTP pyrophosphatase (rdgB) of Escherichia coli O157:H7.